Reading from the N-terminus, the 517-residue chain is Cytochrome P450 monooxygenase TRI4 (517 aa).

A helical membrane pass occupies residues 15 to 37 (AVGAAVAVGALYFFCQCFYNLYL). N-linked (GlcNAc...) asparagine glycosylation occurs at Asn-444. Position 452 (Cys-452) interacts with heme.

It belongs to the cytochrome P450 family. Requires heme as cofactor.

It is found in the membrane. It functions in the pathway sesquiterpene biosynthesis; trichothecene biosynthesis. Its function is as follows. Cytochrome P450 monooxygenase; part of the gene cluster that mediates the production of the antimicrobial trichothecene harzianum A (HA) that plays a role in Botrytis cinerea antagonistic activity and plant defense priming. The biosynthesis of harzianum A begins with the cyclization of farnesyl diphosphate to trichodiene and is catalyzed by the trichodiene synthase TRI5. Trichodiene undergoes a series of oxygenations catalyzed by the cytochrome P450 monooxygenase TRI4. TRI4 controls the addition of 3 oxygens at C-2, C-11, and the C-12, C-13-epoxide to form the intermediate isotrichodiol. Isotrichodiol then undergoes a non-enzymatic isomerization and cyclization to form 12,13-epoxytrichothec-9-ene (EPT) which is further converted to trichodermol by the cytochrome P450 monooxygenase TRI11 via C-4 hydroxylation. The last step of HA synthesis is esterification of an octatriendioyl moiety to the C-4 oxygen of trichodermol. The octatriendioyl moiety is probably produced by the polyketide synthase TRI17 and the esterification performed by the trichothecene O-acetyltransferase TRI3. This chain is Cytochrome P450 monooxygenase TRI4, found in Trichoderma arundinaceum.